A 90-amino-acid polypeptide reads, in one-letter code: Small ribosomal subunit protein bS20 (90 aa).

Residues 1–10 (MANHKSTQKS) are compositionally biased toward polar residues. Residues 1–25 (MANHKSTQKSIRQDQKRNLINKSRK) are disordered.

This sequence belongs to the bacterial ribosomal protein bS20 family.

In terms of biological role, binds directly to 16S ribosomal RNA. In Orientia tsutsugamushi (strain Ikeda) (Rickettsia tsutsugamushi), this protein is Small ribosomal subunit protein bS20.